Reading from the N-terminus, the 373-residue chain is Probable pectin lyase D (373 aa).

The first 24 residues, 1–24 (MKYAAALTAVAALAARAAAVGVSG), serve as a signal peptide directing secretion. Disulfide bonds link Cys82–Cys101 and Cys91–Cys225. N-linked (GlcNAc...) asparagine glycosylation is present at Asn128. Residue Arg255 is part of the active site. N-linked (GlcNAc...) asparagine glycosylation is present at Asn274. An intrachain disulfide couples Cys321 to Cys329. N-linked (GlcNAc...) asparagine glycosylation is present at Asn348. The segment covering 354–366 (LPSADAASTSPAS) has biased composition (low complexity). Positions 354 to 373 (LPSADAASTSPASNAGQGNL) are disordered.

It belongs to the polysaccharide lyase 1 family.

Its subcellular location is the secreted. The catalysed reaction is Eliminative cleavage of (1-&gt;4)-alpha-D-galacturonan methyl ester to give oligosaccharides with 4-deoxy-6-O-methyl-alpha-D-galact-4-enuronosyl groups at their non-reducing ends.. Its function is as follows. Pectinolytic enzymes consist of four classes of enzymes: pectin lyase, polygalacturonase, pectin methylesterase and rhamnogalacturonase. Among pectinolytic enzymes, pectin lyase is the most important in depolymerization of pectin, since it cleaves internal glycosidic bonds of highly methylated pectins. In Aspergillus niger (strain ATCC MYA-4892 / CBS 513.88 / FGSC A1513), this protein is Probable pectin lyase D (pelD).